The sequence spans 173 residues: Alpha-crystallin A chain (173 aa).

Met-1 carries the post-translational modification N-acetylmethionine. The interval 1 to 63 (MDVTIQHPWF…RTVLDSGISE (63 aa)) is required for complex formation with BFSP1 and BFSP2. At Gln-6 the chain carries Deamidated glutamine; partial. Phosphoserine is present on Ser-45. Position 50 is a deamidated glutamine; partial (Gln-50). The region spanning 52 to 162 (LFRTVLDSGI…GHSERAIPVS (111 aa)) is the sHSP domain. Lys-99 is subject to N6-acetyllysine. Residue His-100 participates in Zn(2+) binding. Asn-101 bears the Deamidated asparagine; partial mark. Residues Glu-102 and His-107 each coordinate Zn(2+). Phosphoserine is present on Ser-122. A Deamidated asparagine; partial modification is found at Asn-123. Residues Cys-131 and Cys-142 are joined by a disulfide bond. Residues 146–173 (VQSSMDDGHSERAIPVSREEKPSSVPSS) form a disordered region. Gln-147 is subject to Deamidated glutamine; partial. Positions 151–167 (DDGHSERAIPVSREEKP) are enriched in basic and acidic residues. A Zn(2+)-binding site is contributed by His-154. Ser-162 carries an O-linked (GlcNAc) serine glycan.

This sequence belongs to the small heat shock protein (HSP20) family. As to quaternary structure, heteromer composed of three CRYAA and one CRYAB subunits. Inter-subunit bridging via zinc ions enhances stability, which is crucial as there is no protein turn over in the lens. Can also form homodimers and homotetramers (dimers of dimers) which serve as the building blocks of homooligomers. Within homooligomers, the zinc-binding motif is created from residues of 3 different molecules. His-100 and Glu-102 from one molecule are ligands of the zinc ion, and His-107 and His-154 residues from additional molecules complete the site with tetrahedral coordination geometry. Part of a complex required for lens intermediate filament formation composed of BFSP1, BFSP2 and CRYAA. In terms of processing, undergoes age-dependent proteolytical cleavage at the C-terminus.

The protein localises to the cytoplasm. It is found in the nucleus. In terms of biological role, contributes to the transparency and refractive index of the lens. In its oxidized form (absence of intramolecular disulfide bond), acts as a chaperone, preventing aggregation of various proteins under a wide range of stress conditions. Required for the correct formation of lens intermediate filaments as part of a complex composed of BFSP1, BFSP2 and CRYAA. The polypeptide is Alpha-crystallin A chain (CRYAA) (Orycteropus afer (Aardvark)).